Reading from the N-terminus, the 297-residue chain is Iron-sulfur cluster assembly SufBD family protein ycf24 (297 aa).

This sequence belongs to the iron-sulfur cluster assembly SufBD family.

The protein resides in the plastid. The protein localises to the chloroplast. The protein is Iron-sulfur cluster assembly SufBD family protein ycf24 (ycf24) of Antithamnion sp. (Red alga).